A 279-amino-acid polypeptide reads, in one-letter code: 4-hydroxy-3-methylbut-2-enyl diphosphate reductase (279 aa).

Cysteine 12 serves as a coordination point for [4Fe-4S] cluster. Residues histidine 42 and histidine 74 each contribute to the (2E)-4-hydroxy-3-methylbut-2-enyl diphosphate site. Dimethylallyl diphosphate-binding residues include histidine 42 and histidine 74. The isopentenyl diphosphate site is built by histidine 42 and histidine 74. A [4Fe-4S] cluster-binding site is contributed by cysteine 96. Residue histidine 124 coordinates (2E)-4-hydroxy-3-methylbut-2-enyl diphosphate. Residue histidine 124 coordinates dimethylallyl diphosphate. An isopentenyl diphosphate-binding site is contributed by histidine 124. Residue glutamate 126 is the Proton donor of the active site. (2E)-4-hydroxy-3-methylbut-2-enyl diphosphate is bound at residue threonine 162. Cysteine 190 contacts [4Fe-4S] cluster. Positions 218, 219, 220, and 263 each coordinate (2E)-4-hydroxy-3-methylbut-2-enyl diphosphate. Residues serine 218, serine 219, asparagine 220, and serine 263 each coordinate dimethylallyl diphosphate. Serine 218, serine 219, asparagine 220, and serine 263 together coordinate isopentenyl diphosphate.

Belongs to the IspH family. [4Fe-4S] cluster serves as cofactor.

The enzyme catalyses isopentenyl diphosphate + 2 oxidized [2Fe-2S]-[ferredoxin] + H2O = (2E)-4-hydroxy-3-methylbut-2-enyl diphosphate + 2 reduced [2Fe-2S]-[ferredoxin] + 2 H(+). It catalyses the reaction dimethylallyl diphosphate + 2 oxidized [2Fe-2S]-[ferredoxin] + H2O = (2E)-4-hydroxy-3-methylbut-2-enyl diphosphate + 2 reduced [2Fe-2S]-[ferredoxin] + 2 H(+). The protein operates within isoprenoid biosynthesis; dimethylallyl diphosphate biosynthesis; dimethylallyl diphosphate from (2E)-4-hydroxy-3-methylbutenyl diphosphate: step 1/1. Its pathway is isoprenoid biosynthesis; isopentenyl diphosphate biosynthesis via DXP pathway; isopentenyl diphosphate from 1-deoxy-D-xylulose 5-phosphate: step 6/6. Its function is as follows. Catalyzes the conversion of 1-hydroxy-2-methyl-2-(E)-butenyl 4-diphosphate (HMBPP) into a mixture of isopentenyl diphosphate (IPP) and dimethylallyl diphosphate (DMAPP). Acts in the terminal step of the DOXP/MEP pathway for isoprenoid precursor biosynthesis. The protein is 4-hydroxy-3-methylbut-2-enyl diphosphate reductase of Alkaliphilus oremlandii (strain OhILAs) (Clostridium oremlandii (strain OhILAs)).